Reading from the N-terminus, the 186-residue chain is Acireductone dioxygenase (186 aa).

A disordered region spans residues 1–21 (MSRLSIFPDGSTSMDQSSPTP). The span at 10 to 20 (GSTSMDQSSPT) shows a compositional bias: polar residues. Positions 103, 105, 109, and 147 each coordinate Fe(2+). Residues His-103, His-105, Glu-109, and His-147 each contribute to the Ni(2+) site.

The protein belongs to the acireductone dioxygenase (ARD) family. As to quaternary structure, monomer. Requires Fe(2+) as cofactor. Ni(2+) is required as a cofactor.

The catalysed reaction is 1,2-dihydroxy-5-(methylsulfanyl)pent-1-en-3-one + O2 = 3-(methylsulfanyl)propanoate + CO + formate + 2 H(+). It carries out the reaction 1,2-dihydroxy-5-(methylsulfanyl)pent-1-en-3-one + O2 = 4-methylsulfanyl-2-oxobutanoate + formate + 2 H(+). Its pathway is amino-acid biosynthesis; L-methionine biosynthesis via salvage pathway; L-methionine from S-methyl-5-thio-alpha-D-ribose 1-phosphate: step 5/6. Functionally, catalyzes 2 different reactions between oxygen and the acireductone 1,2-dihydroxy-3-keto-5-methylthiopentene (DHK-MTPene) depending upon the metal bound in the active site. Fe-containing acireductone dioxygenase (Fe-ARD) produces formate and 2-keto-4-methylthiobutyrate (KMTB), the alpha-ketoacid precursor of methionine in the methionine recycle pathway. Ni-containing acireductone dioxygenase (Ni-ARD) produces methylthiopropionate, carbon monoxide and formate, and does not lie on the methionine recycle pathway. This chain is Acireductone dioxygenase, found in Synechococcus sp. (strain CC9902).